The following is a 304-amino-acid chain: Nucleotide-binding protein RHA1_ro07174 (304 aa).

Residue 24–31 (GLSGAGLQ) coordinates ATP. 75-78 (DVRS) serves as a coordination point for GTP.

The protein belongs to the RapZ-like family.

In terms of biological role, displays ATPase and GTPase activities. The chain is Nucleotide-binding protein RHA1_ro07174 from Rhodococcus jostii (strain RHA1).